A 177-amino-acid chain; its full sequence is CASP-like protein 5A2 (177 aa).

The Cytoplasmic portion of the chain corresponds to 1 to 36 (MNASHPAVHPVGVPPAVAGQLPPRMRMKEIQGMPGT). Residues 37–57 (IGGLLLRLGQFCFALVAFSIM) traverse the membrane as a helical segment. Topologically, residues 58–68 (VSIENFSTVTA) are extracellular. Asn62 is a glycosylation site (N-linked (GlcNAc...) asparagine). A helical transmembrane segment spans residues 69-89 (FCYLVAATVLQCLWSLALAII). Over 90–103 (DGYALLVKRSLRNS) the chain is Cytoplasmic. A helical membrane pass occupies residues 104 to 124 (LLVSLLVVGDGVTATLTFAAA). Residues 125–153 (CASAGITVLIGNDLRQCKENHCARYETAT) are Extracellular-facing. A helical membrane pass occupies residues 154–174 (ALAFLSWFMVSLSFILTFWLL). Residues 175–177 (ATR) lie on the Cytoplasmic side of the membrane.

The protein belongs to the Casparian strip membrane proteins (CASP) family. Homodimer and heterodimers.

The protein resides in the cell membrane. The chain is CASP-like protein 5A2 from Ginkgo biloba (Ginkgo).